Here is a 132-residue protein sequence, read N- to C-terminus: ATP synthase epsilon chain (132 aa).

It belongs to the ATPase epsilon chain family. In terms of assembly, F-type ATPases have 2 components, CF(1) - the catalytic core - and CF(0) - the membrane proton channel. CF(1) has five subunits: alpha(3), beta(3), gamma(1), delta(1), epsilon(1). CF(0) has three main subunits: a, b and c.

The protein localises to the cell inner membrane. Its function is as follows. Produces ATP from ADP in the presence of a proton gradient across the membrane. This is ATP synthase epsilon chain from Anaeromyxobacter sp. (strain Fw109-5).